Consider the following 255-residue polypeptide: Triosephosphate isomerase (255 aa).

9-11 (NWK) is a binding site for substrate. Residue His-95 is the Electrophile of the active site. Glu-167 serves as the catalytic Proton acceptor. Substrate is bound by residues Gly-173, Ser-212, and 233–234 (GG).

This sequence belongs to the triosephosphate isomerase family. Homodimer.

It is found in the cytoplasm. The catalysed reaction is D-glyceraldehyde 3-phosphate = dihydroxyacetone phosphate. Its pathway is carbohydrate biosynthesis; gluconeogenesis. It participates in carbohydrate degradation; glycolysis; D-glyceraldehyde 3-phosphate from glycerone phosphate: step 1/1. Its function is as follows. Involved in the gluconeogenesis. Catalyzes stereospecifically the conversion of dihydroxyacetone phosphate (DHAP) to D-glyceraldehyde-3-phosphate (G3P). This Photorhabdus laumondii subsp. laumondii (strain DSM 15139 / CIP 105565 / TT01) (Photorhabdus luminescens subsp. laumondii) protein is Triosephosphate isomerase.